The primary structure comprises 1034 residues: Tubulin glycylase 3D (1034 aa).

2 stretches are compositionally biased toward polar residues: residues 1-13 (MINS…QTLN) and 131-146 (QVNS…QNDF). Disordered regions lie at residues 1–21 (MINS…SQMD), 131–166 (QVNS…STDY), and 189–208 (LNQQ…DNSQ). The segment covering 151 to 161 (RKPKNPTTKKR) has biased composition (basic residues). Residues 189 to 199 (LNQQNQQQQDL) show a composition bias toward low complexity. In terms of domain architecture, TTL spans 571 to 930 (DINNVIDDEK…YGMAQKSGIK (360 aa)). ATP contacts are provided by residues 741 to 744 (QKYI), Lys754, and Asp756. Positions 1002-1034 (HDQKQFSSQQANNIETYSRPQTAKSQTQSSKKL) are disordered.

The protein resides in the cytoplasm. Functionally, probable glycylase which modifies tubulin, generating side chains of glycine on the gamma-carboxyl groups of specific glutamate residues within the C-terminal tail of tubulin. This is Tubulin glycylase 3D (TTLL3D) from Tetrahymena thermophila (strain SB210).